Here is a 509-residue protein sequence, read N- to C-terminus: Lanosterol 14-alpha demethylase (509 aa).

The helical transmembrane segment at 30–50 (GNLLSMLLIACAFTLSLVYLF) threads the bilayer. Cys455 provides a ligand contact to heme.

This sequence belongs to the cytochrome P450 family. The cofactor is heme. Ubiquitinated by MARCHF6, leading to proteasomal degradation.

The protein localises to the endoplasmic reticulum membrane. It is found in the microsome membrane. The enzyme catalyses a 14alpha-methyl steroid + 3 reduced [NADPH--hemoprotein reductase] + 3 O2 = a Delta(14) steroid + formate + 3 oxidized [NADPH--hemoprotein reductase] + 4 H2O + 4 H(+). It carries out the reaction lanosterol + 3 reduced [NADPH--hemoprotein reductase] + 3 O2 = 4,4-dimethyl-5alpha-cholesta-8,14,24-trien-3beta-ol + formate + 3 oxidized [NADPH--hemoprotein reductase] + 4 H2O + 4 H(+). The catalysed reaction is 24,25-dihydrolanosterol + 3 reduced [NADPH--hemoprotein reductase] + 3 O2 = 4,4-dimethyl-8,14-cholestadien-3beta-ol + formate + 3 oxidized [NADPH--hemoprotein reductase] + 4 H2O + 4 H(+). It catalyses the reaction a 14alpha-methyl steroid + reduced [NADPH--hemoprotein reductase] + O2 = a 14alpha-hydroxymethyl steroid + oxidized [NADPH--hemoprotein reductase] + H2O + H(+). The enzyme catalyses a 14alpha-hydroxymethyl steroid + reduced [NADPH--hemoprotein reductase] + O2 = a 14alpha-formyl steroid + oxidized [NADPH--hemoprotein reductase] + 2 H2O + H(+). It carries out the reaction a 14alpha-formyl steroid + reduced [NADPH--hemoprotein reductase] + O2 = a Delta(14) steroid + formate + oxidized [NADPH--hemoprotein reductase] + H2O + 2 H(+). The catalysed reaction is lanosterol + reduced [NADPH--hemoprotein reductase] + O2 = 32-hydroxylanosterol + oxidized [NADPH--hemoprotein reductase] + H2O + H(+). It catalyses the reaction 32-hydroxylanosterol + reduced [NADPH--hemoprotein reductase] + O2 = 32-oxolanosterol + oxidized [NADPH--hemoprotein reductase] + 2 H2O + H(+). The enzyme catalyses 32-oxolanosterol + reduced [NADPH--hemoprotein reductase] + O2 = 4,4-dimethyl-5alpha-cholesta-8,14,24-trien-3beta-ol + formate + oxidized [NADPH--hemoprotein reductase] + H2O + 2 H(+). It carries out the reaction 24,25-dihydrolanosterol + reduced [NADPH--hemoprotein reductase] + O2 = 32-hydroxy-24,25-dihydrolanosterol + oxidized [NADPH--hemoprotein reductase] + H2O + H(+). The catalysed reaction is 32-hydroxy-24,25-dihydrolanosterol + reduced [NADPH--hemoprotein reductase] + O2 = 32-oxo-24,25-dihydrolanosterol + oxidized [NADPH--hemoprotein reductase] + 2 H2O + H(+). It catalyses the reaction 32-oxo-24,25-dihydrolanosterol + reduced [NADPH--hemoprotein reductase] + O2 = 4,4-dimethyl-8,14-cholestadien-3beta-ol + formate + oxidized [NADPH--hemoprotein reductase] + H2O + 2 H(+). The protein operates within steroid biosynthesis; zymosterol biosynthesis; zymosterol from lanosterol: step 1/6. With respect to regulation, inhibited by azalanstat. Inhibited by azole antifungal agents ketoconazole, itraconazole and fluconazole. Its function is as follows. Sterol 14alpha-demethylase that plays a critical role in the cholesterol biosynthesis pathway, being cholesterol the major sterol component in mammalian membranes as well as a precursor for bile acid and steroid hormone synthesis. Cytochrome P450 monooxygenase that catalyzes the three-step oxidative removal of the 14alpha-methyl group (C-32) of sterols such as lanosterol (lanosta-8,24-dien-3beta-ol) and 24,25-dihydrolanosterol (DHL) in the form of formate, and converts the sterols to 4,4-dimethyl-5alpha-cholesta-8,14,24-trien-3beta-ol and 4,4-dimethyl-8,14-cholestadien-3beta-ol, respectively, which are intermediates of cholesterol biosynthesis. Can also demethylate substrates not intrinsic to mammals, such as eburicol (24-methylene-24,25-dihydrolanosterol), but at a lower rate than DHL. The chain is Lanosterol 14-alpha demethylase from Pongo abelii (Sumatran orangutan).